Consider the following 445-residue polypeptide: Beclin-1 (445 aa).

Residues 103–122 (TMENLSRRLKVTGDLFDIMS) carry the BH3 motif. A coiled-coil region spans residues 137-264 (DTLLDQLDTQ…QLDKLKKTNV (128 aa)). The evolutionary conserved domain (ECD) stretch occupies residues 240-445 (DDLKSVENQM…AWVSSQFYNK (206 aa)). The interval 420–445 (WTKALKFMLTNLKWGLAWVSSQFYNK) is required for membrane-association.

It belongs to the beclin family. In terms of assembly, component of the PI3K (PI3KC3/PI3K-III/class III phosphatidylinositol 3-kinase) complex. In terms of processing, may be proteolytically processed by caspases; the C-terminal fragment(s) may induce apoptosis.

Its subcellular location is the cytoplasm. The protein resides in the golgi apparatus. It is found in the trans-Golgi network membrane. The protein localises to the endosome membrane. It localises to the endoplasmic reticulum membrane. Its subcellular location is the mitochondrion membrane. The protein resides in the cytoplasmic vesicle. It is found in the autophagosome. Plays a central role in autophagy. Acts as core subunit of different PI3K complex forms that mediate formation of phosphatidylinositol 3-phosphate and are believed to play a role in multiple membrane trafficking pathways: PI3KC3-C1 is involved in initiation of autophagosomes and PI3KC3-C2 in maturation of autophagosomes and endocytosis. Involved in regulation of degradative endocytic trafficking and required for the abscission step in cytokinesis, probably in the context of PI3KC3-C2. Essential for the formation of PI3KC3-C2 but not PI3KC3-C1 PI3K complex forms. Involved in endocytosis including endosome formation in neuronal cells. The protein is Beclin-1 (becn1) of Xenopus tropicalis (Western clawed frog).